The sequence spans 470 residues: MSQAYSSSQRVSSYRRTFGGAPGFPLGSPLSSPVFPRAGFGSKGSSSSVTSRVYQVSRTSGGAGGLGSLRASRLGTTRTPSSYGAGELLDFSLADAVNQEFLTTRTNEKVELQELNDRFANYIEKVRFLEQQNAALAAEVNRLKGREPTRVAELYEEELRELRRQVEVLTNQRARVDVERDNLLDDLQRLKAKLQEEIQLKEEAENNLAAFRADVDAATLARIDLERRIESLNEEIAFLKKVHEEEIRELQAQLQEQQVQVEMDMSKPDLTAALRDIRAQYETIAAKNISEAEEWYKSKVSDLTQAANKNNDALRQAKQEMMEYRHQIQSYTCEIDALKGTNDSLMRQMRELEDRFASEASGYQDNIARLEEEIRHLKDEMARHLREYQDLLNVKMALDVEIATYRKLLEGEESRINLPIQTYSALNFRETSPEQRGSEVHTKKTVMIKTIETRDGEVVSEATQQQHEVL.

Positions 2-108 (SQAYSSSQRV…QEFLTTRTNE (107 aa)) are head. Ser7 is modified (phosphoserine; by CDK1). At Ser12 the chain carries Phosphoserine; by AURKB. Residue Arg16 is modified to Omega-N-methylarginine. Thr17 carries the post-translational modification Phosphothreonine; by AURKB and ROCK1. Ser28 carries the phosphoserine; by CDK1 modification. A Phosphoserine modification is found at Ser31. Ser32 is modified (phosphoserine; by CDK1). The residue at position 37 (Arg37) is an Asymmetric dimethylarginine; alternate. Residue Arg37 is modified to Omega-N-methylarginine; alternate. Residue Ser45 is modified to Phosphoserine. The residue at position 58 (Arg58) is an ADP-ribosylarginine. A Phosphoserine; by AURKB modification is found at Ser60. Phosphoserine is present on Ser68. Arg70 bears the Omega-N-methylarginine mark. Thr76 and Thr77 each carry phosphothreonine; by ROCK1. Phosphoserine is present on Ser81. In terms of domain architecture, IF rod spans 108–416 (EKVELQELND…KLLEGEESRI (309 aa)). The segment at 109 to 141 (KVELQELNDRFANYIEKVRFLEQQNAALAAEVN) is coil 1A. Positions 142–151 (RLKGREPTRV) are linker 1. Positions 152-252 (AELYEEELRE…HEEEIRELQA (101 aa)) are coil 1B. The segment at 253–268 (QLQEQQVQVEMDMSKP) is linker 12. The tract at residues 268–415 (PDLTAALRDI…RKLLEGEESR (148 aa)) is interaction with NEB. A coil 2A region spans residues 269 to 287 (DLTAALRDIRAQYETIAAK). Residues 288–295 (NISEAEEW) form a linker 2 region. Phosphoserine occurs at positions 290, 358, 361, and 424. The coil 2B stretch occupies residues 296–412 (YKSKVSDLTQ…ATYRKLLEGE (117 aa)). Residues 413 to 470 (ESRINLPIQTYSALNFRETSPEQRGSEVHTKKTVMIKTIETRDGEVVSEATQQQHEVL) form a tail region. The tract at residues 438–453 (SEVHTKKTVMIKTIET) is interaction with CRYAB.

The protein belongs to the intermediate filament family. As to quaternary structure, homomer. Interacts with DST. Interacts with MTM1. Interacts with EPPK1; interaction is dependent of higher-order structure of intermediate filament. Interacts with CRYAB. Interacts with NEB (via nebulin repeats 160-164). Interacts (via rod region) with NEBL (via nebulin repeats 1-5). Interacts with ASB2 isoform 1; the interaction targets DES for proteasomal degradation. Interacts with PLEC isoform 1C. Interacts with PKP1. Interacts with FLII. Post-translationally, ADP-ribosylation prevents ability to form intermediate filaments. Phosphorylation at Ser-7, Ser-28 and Ser-32 by CDK1, phosphorylation at Ser-60 by AURKB and phosphorylation at Thr-76 by ROCK1 contribute to efficient separation of desmin intermediate filaments during mitosis. In terms of processing, ubiquitination by a SCF-like complex containing ASB2 isoform 1 leads to proteasomal degradation.

Its subcellular location is the cytoplasm. The protein localises to the myofibril. The protein resides in the sarcomere. It is found in the z line. It localises to the cell membrane. Its subcellular location is the sarcolemma. The protein localises to the nucleus. The protein resides in the cell tip. It is found in the nucleus envelope. Functionally, muscle-specific type III intermediate filament essential for proper muscular structure and function. Plays a crucial role in maintaining the structure of sarcomeres, inter-connecting the Z-disks and forming the myofibrils, linking them not only to the sarcolemmal cytoskeleton, but also to the nucleus and mitochondria, thus providing strength for the muscle fiber during activity. In adult striated muscle they form a fibrous network connecting myofibrils to each other and to the plasma membrane from the periphery of the Z-line structures. May act as a sarcomeric microtubule-anchoring protein: specifically associates with detyrosinated tubulin-alpha chains, leading to buckled microtubules and mechanical resistance to contraction. Required for nuclear membrane integrity, via anchoring at the cell tip and nuclear envelope, resulting in maintenance of microtubule-derived intracellular mechanical forces. Contributes to the transcriptional regulation of the NKX2-5 gene in cardiac progenitor cells during a short period of cardiomyogenesis and in cardiac side population stem cells in the adult. Plays a role in maintaining an optimal conformation of nebulette (NEB) on heart muscle sarcomeres to bind and recruit cardiac alpha-actin. This chain is Desmin (DES), found in Homo sapiens (Human).